Consider the following 128-residue polypeptide: RxLR effector protein SFI2 (128 aa).

An N-terminal signal peptide occupies residues 1-22 (MRSAFYIFLVVAVLARCSVVAA). A RxLR-dEER motif is present at residues 52-71 (RLLRVAGREDDDATTDEEDR).

The protein belongs to the RxLR effector family.

Its subcellular location is the secreted. It is found in the host nucleus. Its function is as follows. Effector that suppresses flg22-induced post-translational MAP kinase activation both tomato and Arabidopsis. The perception of highly conserved pathogen- or microbe-associated molecular patterns (PAMPs/MAMPs), such as flg22, triggers converging signaling pathways recruiting MAP kinase cascades and inducing transcriptional re-programming, yielding a generic antimicrobial response. This Phytophthora infestans (strain T30-4) (Potato late blight agent) protein is RxLR effector protein SFI2.